The sequence spans 342 residues: UDP-N-acetylenolpyruvoylglucosamine reductase (342 aa).

An FAD-binding PCMH-type domain is found at 13–183 (IDHNAQHIVC…VAVGLRLPKE (171 aa)). Arginine 159 is a catalytic residue. The active-site Proton donor is serine 229. Glutamate 325 is a catalytic residue.

Belongs to the MurB family. FAD is required as a cofactor.

Its subcellular location is the cytoplasm. The catalysed reaction is UDP-N-acetyl-alpha-D-muramate + NADP(+) = UDP-N-acetyl-3-O-(1-carboxyvinyl)-alpha-D-glucosamine + NADPH + H(+). Its pathway is cell wall biogenesis; peptidoglycan biosynthesis. Functionally, cell wall formation. The protein is UDP-N-acetylenolpyruvoylglucosamine reductase of Shigella sonnei (strain Ss046).